The sequence spans 224 residues: MIEAKNVWKIYGKGEAKTIALKNINLKIEEGEFVMIMGPSGCGKSTLLNILALLDTPTKGEVYYKGRRTSSMSENERAIFRRKISGFIFQQFHLIKTLTALENVELPMMLDERDKSYRRKRAKKLLEMVGLGDRLNHYPHQLSGGQQQRVAIARALANNPKIIFADEPTGNLDSKSGMAVMSILKGLNEKGITIIMVTHEQELTKYASKIIKLRDGEIVEIINK.

Positions 2 to 221 (IEAKNVWKIY…KLRDGEIVEI (220 aa)) constitute an ABC transporter domain. 38-45 (GPSGCGKS) lines the ATP pocket.

This sequence belongs to the ABC transporter superfamily.

This is an uncharacterized protein from Methanocaldococcus jannaschii (strain ATCC 43067 / DSM 2661 / JAL-1 / JCM 10045 / NBRC 100440) (Methanococcus jannaschii).